Consider the following 428-residue polypeptide: Endoplasmic reticulum junction formation protein lunapark (428 aa).

G2 is lipidated: N-myristoyl glycine. At 2-45 (GGLFSRWRTKLSTVEVLESIDKEIQALEEFREKNQRLQKLRVGR) the chain is on the cytoplasmic side. Residues 16-43 (EVLESIDKEIQALEEFREKNQRLQKLRV) adopt a coiled-coil conformation. The chain crosses the membrane as a helical span at residues 46–66 (LILYSSVLYLFTCLIVYLWYL). Residues 67-77 (PDEFTARLAMT) lie on the Lumenal side of the membrane. Residues 78–98 (LPFFAFPLIIWSIRTVIIFFF) form a helical membrane-spanning segment. Over 99–428 (SKRTERNNEA…ELNGESLTAE (330 aa)) the chain is Cytoplasmic. The stretch at 102-128 (TERNNEALDDLKSQRKKILEEVMEKET) forms a coiled coil. Residues S114, S153, S177, S182, and S194 each carry the phosphoserine modification. A disordered region spans residues 143-248 (SKKAKECEPP…PPGPPLARPI (106 aa)). A compositionally biased stretch (pro residues) spans 185–198 (QGPPPQVPVSPGPP). Phosphothreonine occurs at positions 211 and 213. 2 positions are modified to phosphoserine: S217 and S227. The segment at 276 to 301 (CQQCFSHNGMALKEEFEYIAFRCAYC) adopts a C4-type; plays a role in ER morphology zinc-finger fold. Phosphoserine is present on residues S321, S353, and S384. A disordered region spans residues 361–428 (NNTEQTDDKI…ELNGESLTAE (68 aa)). Over residues 386 to 401 (SEEPEEKQETENEEAS) the composition is skewed to acidic residues. At S414 the chain carries Phosphoserine.

Belongs to the lunapark family. Homodimer; homodimerization requires the C4-type zinc finger motif and decreases during mitosis in a phosphorylation-dependent manner. In terms of processing, myristoylated; myristoylation is necessary for the endoplasmic reticulum (ER) three-way ER tubular junction formation, but is not required neither for membrane translocation, membrane topology formation, nor for the specific localization to ER membranes. Phosphorylated. Phosphorylation occurs at Ser-177, Ser-182, Ser-217, Ser-227, Ser-321 and Ser-384 during interphase. Phosphorylation occurs at Ser-114, Ser-153, Ser-194, Thr-211 and Ser-353 during mitosis; these phosphorylations reduce both its homodimerization and the ER three-way tubular junction formation. Post-translationally, subject to proteasomal degradation following phosphorylation during mitosis.

The protein resides in the endoplasmic reticulum membrane. Functionally, endoplasmic reticulum (ER)-shaping membrane protein that plays a role in determining ER morphology. Involved in the stabilization of nascent three-way ER tubular junctions within the ER network. May also play a role as a curvature-stabilizing protein within three-way ER tubular junction network. May be involved in limb and central nervous system development. The chain is Endoplasmic reticulum junction formation protein lunapark from Pongo abelii (Sumatran orangutan).